A 531-amino-acid chain; its full sequence is Arginine--tRNA ligase (531 aa).

Residues Ala113–His123 carry the 'HIGH' region motif.

This sequence belongs to the class-I aminoacyl-tRNA synthetase family. Monomer.

It localises to the cytoplasm. It catalyses the reaction tRNA(Arg) + L-arginine + ATP = L-arginyl-tRNA(Arg) + AMP + diphosphate. This Campylobacter lari (strain RM2100 / D67 / ATCC BAA-1060) protein is Arginine--tRNA ligase.